A 236-amino-acid polypeptide reads, in one-letter code: 3-oxoacyl-[acyl-carrier-protein] reductase (236 aa).

Met-1 bears the N-acetylmethionine mark. NADP(+)-binding positions include 11 to 14 (SRGI) and 34 to 35 (RN). Position 40 is an N6-acetyllysine (Lys-40). Residues Asp-56 and 83–85 (AAG) each bind NADP(+). Lys-96 carries the post-translational modification N6-acetyllysine. Ser-134 is a binding site for substrate. NADP(+) contacts are provided by residues Tyr-147, Lys-151, and 180–182 (IRT). Tyr-147 functions as the Proton acceptor in the catalytic mechanism. Position 194 is an N6-acetyllysine (Lys-194).

Belongs to the short-chain dehydrogenases/reductases (SDR) family. As to quaternary structure, homotetramer (in vitro). Heterotetramer with HSD17B8; contains two molecules each of HSD17B8 and CBR4. Does not form homotetramers when HSD17B8 is coexpressed, only heterotetramers (in vitro).

Its subcellular location is the mitochondrion matrix. The enzyme catalyses a (3R)-hydroxyacyl-[ACP] + NADP(+) = a 3-oxoacyl-[ACP] + NADPH + H(+). It carries out the reaction a quinone + NADPH + H(+) = a quinol + NADP(+). The protein operates within lipid metabolism; fatty acid biosynthesis. Component of the heterotetramer complex KAR (3-ketoacyl-[acyl carrier protein] reductase or 3-ketoacyl-[ACP] reductase) that forms part of the mitochondrial fatty acid synthase (mtFAS). Beta-subunit of the KAR heterotetramer complex, responsible for the 3-ketoacyl-ACP reductase activity of the mtFAS, reduces 3-oxoacyl-[ACP] to (3R)-hydroxyacyl-[ACP] in a NADPH-dependent manner with no chain length preference, thereby participating in mitochondrial fatty acid biosynthesis. The homotetramer has NADPH-dependent quinone reductase activity (in vitro), hence could play a role in protection against cytotoxicity of exogenous quinones. As a heterotetramer, it can also reduce 9,10-phenanthrenequinone, 1,4-benzoquinone and various other o-quinones and p-quinones (in vitro). This Mus musculus (Mouse) protein is 3-oxoacyl-[acyl-carrier-protein] reductase (Cbr4).